A 51-amino-acid polypeptide reads, in one-letter code: VTVDCSGYPKPACTLEYFPLCGSDNQTYANKCAFCNAVVEKNVTLRHLGKC.

The region spanning 3-51 (VDCSGYPKPACTLEYFPLCGSDNQTYANKCAFCNAVVEKNVTLRHLGKC) is the Kazal-like domain. Cystine bridges form between C5-C35, C13-C32, and C21-C51. The N-linked (GlcNAc...) asparagine glycan is linked to N42.

The protein resides in the secreted. The chain is Ovomucoid from Nothoprocta cinerascens (Brushland tinamou).